The primary structure comprises 178 residues: Protein GrpE (178 aa).

A compositionally biased stretch (polar residues) spans 1 to 11 (MENTQENPTDQ). The segment at 1 to 31 (MENTQENPTDQTTEETGREAQAAENAAPAAE) is disordered. Residues 19-31 (EAQAAENAAPAAE) show a composition bias toward low complexity.

It belongs to the GrpE family. In terms of assembly, homodimer.

The protein resides in the cytoplasm. Its function is as follows. Participates actively in the response to hyperosmotic and heat shock by preventing the aggregation of stress-denatured proteins, in association with DnaK and GrpE. It is the nucleotide exchange factor for DnaK and may function as a thermosensor. Unfolded proteins bind initially to DnaJ; upon interaction with the DnaJ-bound protein, DnaK hydrolyzes its bound ATP, resulting in the formation of a stable complex. GrpE releases ADP from DnaK; ATP binding to DnaK triggers the release of the substrate protein, thus completing the reaction cycle. Several rounds of ATP-dependent interactions between DnaJ, DnaK and GrpE are required for fully efficient folding. This Burkholderia thailandensis (strain ATCC 700388 / DSM 13276 / CCUG 48851 / CIP 106301 / E264) protein is Protein GrpE.